The following is a 675-amino-acid chain: Pesticidal crystal protein Cry25Aa (675 aa).

It belongs to the delta endotoxin family.

Functionally, promotes colloidosmotic lysis by binding to the midgut epithelial cells of insects. The polypeptide is Pesticidal crystal protein Cry25Aa (cry25Aa) (Bacillus thuringiensis subsp. jegathesan).